The chain runs to 338 residues: Ketol-acid reductoisomerase (NADP(+)) (338 aa).

The 181-residue stretch at Met1 to Thr181 folds into the KARI N-terminal Rossmann domain. Residues Tyr24–Gln27, Arg47, Ser52, and Asp82–Gln85 contribute to the NADP(+) site. His107 is an active-site residue. Gly133 is a binding site for NADP(+). In terms of domain architecture, KARI C-terminal knotted spans Ser182–Ile327. Mg(2+)-binding residues include Asp190, Glu194, Glu226, and Glu230. Ser251 is a binding site for substrate.

It belongs to the ketol-acid reductoisomerase family. It depends on Mg(2+) as a cofactor.

It catalyses the reaction (2R)-2,3-dihydroxy-3-methylbutanoate + NADP(+) = (2S)-2-acetolactate + NADPH + H(+). The enzyme catalyses (2R,3R)-2,3-dihydroxy-3-methylpentanoate + NADP(+) = (S)-2-ethyl-2-hydroxy-3-oxobutanoate + NADPH + H(+). Its pathway is amino-acid biosynthesis; L-isoleucine biosynthesis; L-isoleucine from 2-oxobutanoate: step 2/4. The protein operates within amino-acid biosynthesis; L-valine biosynthesis; L-valine from pyruvate: step 2/4. Functionally, involved in the biosynthesis of branched-chain amino acids (BCAA). Catalyzes an alkyl-migration followed by a ketol-acid reduction of (S)-2-acetolactate (S2AL) to yield (R)-2,3-dihydroxy-isovalerate. In the isomerase reaction, S2AL is rearranged via a Mg-dependent methyl migration to produce 3-hydroxy-3-methyl-2-ketobutyrate (HMKB). In the reductase reaction, this 2-ketoacid undergoes a metal-dependent reduction by NADPH to yield (R)-2,3-dihydroxy-isovalerate. The sequence is that of Ketol-acid reductoisomerase (NADP(+)) from Laribacter hongkongensis (strain HLHK9).